Reading from the N-terminus, the 462-residue chain is Cleavage and polyadenylation specificity factor subunit 7 (462 aa).

Disordered stretches follow at residues 34–68 (VLTA…NKTP) and 161–213 (TRQN…PSVL). A compositionally biased stretch (pro residues) spans 50 to 62 (EPPPPVRQEPAPK). Positions 82 to 162 (AAVYVGSFSW…EKVDVRPATR (81 aa)) constitute an RRM domain. The segment covering 181–190 (HSRDSSDSAD) has biased composition (basic and acidic residues). A Phosphothreonine modification is found at Thr194. Ser196 carries the post-translational modification Phosphoserine. Lys345 participates in a covalent cross-link: Glycyl lysine isopeptide (Lys-Gly) (interchain with G-Cter in SUMO2). The segment at 400 to 462 (SVGASGSSSR…HRDRERDRHH (63 aa)) is disordered. 2 positions are modified to phosphoserine: Ser404 and Ser414. Positions 409–460 (RKRHRSRERSPSRSRESSRRHRDLLHNEDRHDDYFQERNREHERHRDRERDR) are arg/Ser-rich domain. 2 stretches are compositionally biased toward basic and acidic residues: residues 416-425 (ERSPSRSRES) and 432-462 (LLHN…DRHH).

It belongs to the RRM CPSF6/7 family. In terms of assembly, component of the cleavage factor Im (CFIm) complex which is a heterotetramer composed of two subunits of NUDT21/CPSF5 and two subunits of CPSF6 or CPSF7 or a heterodimer of CPSF6 and CPSF7. The cleavage factor Im (CFIm) complex associates with the CPSF and CSTF complexes to promote the assembly of the core mRNA 3'-processing machinery. Interacts with NUDT21/CPSF5. Interacts (via Arg/Ser-rich domain) with FIP1L1 (preferentially via unphosphorylated form and Arg/Glu/Asp-rich region); this interaction mediates, at least in part, the interaction between the CFIm and CPSF complexes and may be inhibited by CPSF7 hyper-phosphorylation. Phosphorylated. Post-translationally, asymmetrically dimethylated on arginine residues by PRMT1.

The protein localises to the nucleus. It localises to the cytoplasm. Its function is as follows. Component of the cleavage factor Im (CFIm) complex that functions as an activator of the pre-mRNA 3'-end cleavage and polyadenylation processing required for the maturation of pre-mRNA into functional mRNAs. CFIm contributes to the recruitment of multiprotein complexes on specific sequences on the pre-mRNA 3'-end, so called cleavage and polyadenylation signals (pA signals). Most pre-mRNAs contain multiple pA signals, resulting in alternative cleavage and polyadenylation (APA) producing mRNAs with variable 3'-end formation. The CFIm complex acts as a key regulator of cleavage and polyadenylation site choice during APA through its binding to 5'-UGUA-3' elements localized in the 3'-untranslated region (UTR) for a huge number of pre-mRNAs. CPSF7 activates directly the mRNA 3'-processing machinery. Binds to pA signals in RNA substrates. The polypeptide is Cleavage and polyadenylation specificity factor subunit 7 (Rattus norvegicus (Rat)).